Consider the following 428-residue polypeptide: tRNA(Ile)-lysidine synthase (428 aa).

Position 28–33 (serine 28–serine 33) interacts with ATP.

This sequence belongs to the tRNA(Ile)-lysidine synthase family.

Its subcellular location is the cytoplasm. It carries out the reaction cytidine(34) in tRNA(Ile2) + L-lysine + ATP = lysidine(34) in tRNA(Ile2) + AMP + diphosphate + H(+). In terms of biological role, ligates lysine onto the cytidine present at position 34 of the AUA codon-specific tRNA(Ile) that contains the anticodon CAU, in an ATP-dependent manner. Cytidine is converted to lysidine, thus changing the amino acid specificity of the tRNA from methionine to isoleucine. In Streptococcus pyogenes serotype M18 (strain MGAS8232), this protein is tRNA(Ile)-lysidine synthase.